The chain runs to 227 residues: Urease accessory protein UreG (227 aa).

Positions methionine 1–aspartate 10 are enriched in basic and acidic residues. The interval methionine 1 to proline 22 is disordered. Glycine 35–threonine 42 contributes to the GTP binding site.

This sequence belongs to the SIMIBI class G3E GTPase family. UreG subfamily. In terms of assembly, homodimer. UreD, UreF and UreG form a complex that acts as a GTP-hydrolysis-dependent molecular chaperone, activating the urease apoprotein by helping to assemble the nickel containing metallocenter of UreC. The UreE protein probably delivers the nickel.

The protein localises to the cytoplasm. Its function is as follows. Facilitates the functional incorporation of the urease nickel metallocenter. This process requires GTP hydrolysis, probably effectuated by UreG. The protein is Urease accessory protein UreG of Streptomyces avermitilis (strain ATCC 31267 / DSM 46492 / JCM 5070 / NBRC 14893 / NCIMB 12804 / NRRL 8165 / MA-4680).